An 83-amino-acid chain; its full sequence is UPF0729 protein CBG02799 (83 aa).

The segment at 51–83 is disordered; the sequence is QEKKEEEEEKEKSCCSTEAENTTEVTTETKKDQ. Positions 67–76 are enriched in low complexity; sequence TEAENTTEVT.

Belongs to the UPF0729 family.

This chain is UPF0729 protein CBG02799, found in Caenorhabditis briggsae.